A 136-amino-acid polypeptide reads, in one-letter code: Evasin P991 (136 aa).

The signal sequence occupies residues M1–A28. 7 N-linked (GlcNAc...) asparagine glycosylation sites follow: N41, N61, N64, N78, N92, N100, and N122. 4 cysteine pairs are disulfide-bonded: C55–C77, C73–C114, C90–C119, and C109–C128.

Its subcellular location is the secreted. Functionally, salivary chemokine-binding protein which has chemokine-neutralizing activity and binds to host chemokines CCL2, CCL3, CCL3L1, CCL4, CCL4L1, CCL5, CCL6, CCL7, CCL8, CCL9, CCL11, CCL12, CCL13, CCL14, CCL16, CCL17, CCL18, CCL19, CCL22, CCL23, CCL24 and CCL27. This Amblyomma cajennense (Cayenne tick) protein is Evasin P991.